A 344-amino-acid polypeptide reads, in one-letter code: MPVEKFLKDFTIPEKIEFLKSQDDGSYGKFTIYPFERGFGVTIGNTLRRVLLSSIEGYAITAMRIQSNNKDSSSKVVSSEFDLIPGVSEDTLEVIANIKNIHLKLGEGEQRKIISFSVSGKDTKVLKASHFERDGVEVFNRDLVIATLSQDVNLDLEFQINYGRGYVSSEQNSKYLEEVNVIALDSIFSPIEKVSYSVEDTRVGQRSDYDKLVMEIWTTGVISAKDAIKKAASIIREFLFPLIDFEDNINTSFEKSKSESSNLLDMSIEKLDLSVRSLNCLAKENVRTLGELISKNAEELSKARNFGKKSLEEIIEKLSSYQLFLGMSKEDALFVLSKNVKISE.

Residues 1–246 form an alpha N-terminal domain (alpha-NTD) region; that stretch reads MPVEKFLKDF…EFLFPLIDFE (246 aa). Residues 259–344 form an alpha C-terminal domain (alpha-CTD) region; the sequence is ESSNLLDMSI…VLSKNVKISE (86 aa).

It belongs to the RNA polymerase alpha chain family. In terms of assembly, homodimer. The RNAP catalytic core consists of 2 alpha, 1 beta, 1 beta' and 1 omega subunit. When a sigma factor is associated with the core the holoenzyme is formed, which can initiate transcription.

It catalyses the reaction RNA(n) + a ribonucleoside 5'-triphosphate = RNA(n+1) + diphosphate. Functionally, DNA-dependent RNA polymerase catalyzes the transcription of DNA into RNA using the four ribonucleoside triphosphates as substrates. This chain is DNA-directed RNA polymerase subunit alpha, found in Borrelia garinii subsp. bavariensis (strain ATCC BAA-2496 / DSM 23469 / PBi) (Borreliella bavariensis).